The following is a 501-amino-acid chain: Sucrose-6-phosphate hydrolase (501 aa).

Residues 44–47 (LLND), Gln63, 106–107 (YT), 167–168 (RD), and Glu222 each bind substrate. Asp47 is a catalytic residue.

Belongs to the glycosyl hydrolase 32 family.

It carries out the reaction Hydrolysis of terminal non-reducing beta-D-fructofuranoside residues in beta-D-fructofuranosides.. The protein operates within glycan biosynthesis; sucrose metabolism. The sequence is that of Sucrose-6-phosphate hydrolase (scrB) from Pediococcus pentosaceus.